A 63-amino-acid polypeptide reads, in one-letter code: Beta-defensin 38 (63 aa).

The N-terminal stretch at 1-21 (MKISCFLLLILSLYFFQINQA) is a signal peptide. 3 disulfide bridges follow: Cys-29–Cys-58, Cys-36–Cys-51, and Cys-41–Cys-59.

The protein belongs to the beta-defensin family. As to expression, only expressed in epididymis (caput, corpus and cauda).

It localises to the secreted. Functionally, synthetic Defb38 kills both Gram-negative (E.coli and P.aeruginosa) and Gram-positive (E.faecium) bacteria. The sequence is that of Beta-defensin 38 (Defb38) from Mus musculus (Mouse).